A 172-amino-acid polypeptide reads, in one-letter code: Protein-export protein SecB (172 aa).

The segment at 152 to 172 is disordered; that stretch reads AQGAEGGNSGIVMPDGSQARH.

It belongs to the SecB family. Homotetramer, a dimer of dimers. One homotetramer interacts with 1 SecA dimer.

Its subcellular location is the cytoplasm. One of the proteins required for the normal export of preproteins out of the cell cytoplasm. It is a molecular chaperone that binds to a subset of precursor proteins, maintaining them in a translocation-competent state. It also specifically binds to its receptor SecA. The sequence is that of Protein-export protein SecB from Cupriavidus necator (strain ATCC 17699 / DSM 428 / KCTC 22496 / NCIMB 10442 / H16 / Stanier 337) (Ralstonia eutropha).